Reading from the N-terminus, the 171-residue chain is Large ribosomal subunit protein uL10 (171 aa).

This sequence belongs to the universal ribosomal protein uL10 family. As to quaternary structure, part of the ribosomal stalk of the 50S ribosomal subunit. The N-terminus interacts with L11 and the large rRNA to form the base of the stalk. The C-terminus forms an elongated spine to which L12 dimers bind in a sequential fashion forming a multimeric L10(L12)X complex.

Functionally, forms part of the ribosomal stalk, playing a central role in the interaction of the ribosome with GTP-bound translation factors. This is Large ribosomal subunit protein uL10 from Paracoccus denitrificans (strain Pd 1222).